Reading from the N-terminus, the 91-residue chain is Cell division topological specificity factor (91 aa).

Belongs to the MinE family.

Prevents the cell division inhibition by proteins MinC and MinD at internal division sites while permitting inhibition at polar sites. This ensures cell division at the proper site by restricting the formation of a division septum at the midpoint of the long axis of the cell. The chain is Cell division topological specificity factor from Wigglesworthia glossinidia brevipalpis.